The following is a 1021-amino-acid chain: Contactin-1 (1021 aa).

The first 20 residues, M1–G20, serve as a signal peptide directing secretion. Ig-like C2-type domains follow at residues P41–S131, P137–F223, P241–Y326, P331–K407, P413–V500, and P504–R603. Intrachain disulfides connect C65/C114 and C158/C211. 2 N-linked (GlcNAc...) asparagine glycosylation sites follow: N208 and N258. A disulfide bond links C263 and C310. N338 is a glycosylation site (N-linked (GlcNAc...) asparagine). 2 disulfide bridges follow: C352–C391 and C436–C484. N457, N473, N494, and N521 each carry an N-linked (GlcNAc...) asparagine glycan. C526 and C585 are oxidised to a cystine. Residue N593 is glycosylated (N-linked (GlcNAc...) asparagine). 4 Fibronectin type-III domains span residues P608 to A706, A711 to D808, A813 to S908, and Q909 to S1002. A disordered region spans residues S695–G719. N935 carries an N-linked (GlcNAc...) asparagine glycan. S1001 is lipidated: GPI-anchor amidated serine. Residues S1002–F1021 constitute a propeptide, removed in mature form.

Belongs to the immunoglobulin superfamily. Contactin family. In terms of assembly, monomer. Interacts with NOTCH1. Interacts with CNTNAP1 in cis form and TNR. Binds to the carbonic-anhydrase like domain of PTPRZ1. Detected in a complex with NRCAM and PTPRB. Interacts with TASOR. In terms of tissue distribution, expressed by neurons, oligodendrocytes and their progenitors (at protein level). Myelination regulates the expression being down-regulated when neurons are in contact with Schwann cells.

The protein localises to the cell membrane. In terms of biological role, contactins mediate cell surface interactions during nervous system development. Involved in the formation of paranodal axo-glial junctions in myelinated peripheral nerves and in the signaling between axons and myelinating glial cells via its association with CNTNAP1. Participates in oligodendrocytes generation by acting as a ligand of NOTCH1. Its association with NOTCH1 promotes NOTCH1 activation through the released notch intracellular domain (NICD) and subsequent translocation to the nucleus. Interaction with TNR induces a repulsion of neurons and an inhibition of neurite outgrowth. The polypeptide is Contactin-1 (Cntn1) (Rattus norvegicus (Rat)).